The primary structure comprises 391 residues: Argininosuccinate synthase (391 aa).

6-14 lines the ATP pocket; that stretch reads AYSGGLDTT. Position 84 (Tyr84) interacts with L-citrulline. Gly114 lines the ATP pocket. L-aspartate-binding residues include Thr116, Asn120, and Asp121. Asn120 lines the L-citrulline pocket. The L-citrulline site is built by Arg124, Ser171, Ser180, Glu253, and Tyr265.

Belongs to the argininosuccinate synthase family. Type 1 subfamily. In terms of assembly, homotetramer.

The protein localises to the cytoplasm. The catalysed reaction is L-citrulline + L-aspartate + ATP = 2-(N(omega)-L-arginino)succinate + AMP + diphosphate + H(+). It functions in the pathway amino-acid biosynthesis; L-arginine biosynthesis; L-arginine from L-ornithine and carbamoyl phosphate: step 2/3. This Saccharolobus solfataricus (strain ATCC 35092 / DSM 1617 / JCM 11322 / P2) (Sulfolobus solfataricus) protein is Argininosuccinate synthase.